The following is a 489-amino-acid chain: NADH-quinone oxidoreductase subunit N (489 aa).

14 consecutive transmembrane segments (helical) span residues 6–26, 37–57, 66–86, 105–125, 127–147, 159–179, 204–224, 239–259, 271–291, 299–319, 329–349, 377–397, 408–430, and 452–472; these read VLFI…AVML, VFYI…PASS, LLIV…GSLA, FYLL…AHHL, AIFI…GYAF, YMVL…LIYA, ITLL…KLSL, PAPV…AVLL, FFYS…NLLA, RLLG…LIAC, VALY…VVSL, SAMT…GFIG, FHLW…YYLR, and ALTT…LLGI.

Belongs to the complex I subunit 2 family. In terms of assembly, NDH-1 is composed of 14 different subunits. Subunits NuoA, H, J, K, L, M, N constitute the membrane sector of the complex.

The protein localises to the cell inner membrane. The enzyme catalyses a quinone + NADH + 5 H(+)(in) = a quinol + NAD(+) + 4 H(+)(out). Functionally, NDH-1 shuttles electrons from NADH, via FMN and iron-sulfur (Fe-S) centers, to quinones in the respiratory chain. The immediate electron acceptor for the enzyme in this species is believed to be ubiquinone. Couples the redox reaction to proton translocation (for every two electrons transferred, four hydrogen ions are translocated across the cytoplasmic membrane), and thus conserves the redox energy in a proton gradient. This is NADH-quinone oxidoreductase subunit N from Tolumonas auensis (strain DSM 9187 / NBRC 110442 / TA 4).